The following is a 708-amino-acid chain: Ubiquitin thioesterase Zranb1 (708 aa).

The RanBP2-type 1 zinc-finger motif lies at 3-33 (EHGIKWACEYCTYENWPSAIKCTMCRAQRPS). Positions 10, 13, 24, and 27 each coordinate Zn(2+). Residues 38–73 (TEDPFKSGSSDVGRDWDPSSTEGGSSPLICPDSSAR) form a disordered region. 2 RanBP2-type zinc fingers span residues 84–113 (NANK…QRRT) and 149–178 (RTQH…PRPN). 8 residues coordinate Zn(2+): C90, C93, C104, C107, C155, C158, C169, and C172. Positions 202 to 224 (RWRGGCSSGNSQRRSPPTTKRDS) are disordered. A compositionally biased stretch (polar residues) spans 209 to 219 (SGNSQRRSPPT). 2 ANK repeats span residues 260-290 (KKTD…SGGD) and 313-340 (YTLV…QQAA). Residues 432 to 592 (LYALWNRTAG…RGHFSALVAM (161 aa)) enclose the OTU domain. C443 (nucleophile) is an active-site residue. The active-site Proton acceptor is H585.

It belongs to the peptidase C64 family. In terms of assembly, interacts with TRAF6. Interacts with APC.

The protein localises to the cytoplasm. It localises to the nucleus. The enzyme catalyses Thiol-dependent hydrolysis of ester, thioester, amide, peptide and isopeptide bonds formed by the C-terminal Gly of ubiquitin (a 76-residue protein attached to proteins as an intracellular targeting signal).. Its function is as follows. Ubiquitin thioesterase, which specifically hydrolyzes 'Lys-29'-linked and 'Lys-33'-linked diubiquitin. Also cleaves 'Lys-63'-linked chains, but with 40-fold less efficiency compared to 'Lys-29'-linked ones. Positive regulator of the Wnt signaling pathway that deubiquitinates APC protein, a negative regulator of Wnt-mediated transcription. Acts as a regulator of autophagy by mediating deubiquitination of PIK3C3/VPS34, thereby promoting autophagosome maturation. Plays a role in the regulation of cell morphology and cytoskeletal organization. Required in the stress fiber dynamics and cell migration. This chain is Ubiquitin thioesterase Zranb1, found in Mus musculus (Mouse).